Here is a 346-residue protein sequence, read N- to C-terminus: Glycerol-1-phosphate dehydrogenase [NAD(P)+] (346 aa).

Residues 93 to 97 (GSIID) and 115 to 118 (TTAS) each bind NAD(+). Asp120 lines the substrate pocket. An NAD(+)-binding site is contributed by Ser124. Asp167 is a binding site for substrate. Positions 167 and 247 each coordinate Zn(2+). Residue His251 coordinates substrate. His263 is a Zn(2+) binding site.

This sequence belongs to the glycerol-1-phosphate dehydrogenase family. It depends on Zn(2+) as a cofactor.

The protein resides in the cytoplasm. It carries out the reaction sn-glycerol 1-phosphate + NAD(+) = dihydroxyacetone phosphate + NADH + H(+). The enzyme catalyses sn-glycerol 1-phosphate + NADP(+) = dihydroxyacetone phosphate + NADPH + H(+). The protein operates within membrane lipid metabolism; glycerophospholipid metabolism. In terms of biological role, catalyzes the NAD(P)H-dependent reduction of dihydroxyacetonephosphate (DHAP or glycerone phosphate) to glycerol 1-phosphate (G1P). The G1P thus generated is used as the glycerophosphate backbone of phospholipids in the cellular membranes of Archaea. This chain is Glycerol-1-phosphate dehydrogenase [NAD(P)+], found in Pyrococcus abyssi (strain GE5 / Orsay).